Consider the following 219-residue polypeptide: Large ribosomal subunit protein uL16y (219 aa).

Belongs to the universal ribosomal protein uL16 family. Component of the small ribosomal subunit. Mature ribosomes consist of a small (40S) and a large (60S) subunit. The 40S subunit contains about 33 different proteins and 1 molecule of RNA (18S). The 60S subunit contains about 49 different proteins and 3 molecules of RNA (25S, 5.8S and 5S).

The polypeptide is Large ribosomal subunit protein uL16y (SG12) (Oryza sativa subsp. japonica (Rice)).